A 1134-amino-acid polypeptide reads, in one-letter code: DNA damage-binding protein 1 (1134 aa).

This sequence belongs to the DDB1 family. In terms of assembly, interacts with cdt-1 and cul-4. As to expression, expressed at high levels in the spermatheca of adult hermaphrodites.

It is found in the cytoplasm. The protein localises to the nucleus. It participates in protein modification; protein ubiquitination. Plays a role in DNA repair. May be a component of an E3 ubiquitin-protein ligase which promotes histone ubiquitination in response to UV irradiation. Histone ubiquitination may be important for subsequent DNA repair. Promotes the degradation of the replication licensing factor cdt-1 during S-phase, thereby preventing rereplication of DNA during a single round of cell division. The sequence is that of DNA damage-binding protein 1 (ddb-1) from Caenorhabditis elegans.